We begin with the raw amino-acid sequence, 557 residues long: Dihydroxy-acid dehydratase (557 aa).

C50 lines the [2Fe-2S] cluster pocket. Position 82 (D82) interacts with Mg(2+). C123 lines the [2Fe-2S] cluster pocket. D124 and K125 together coordinate Mg(2+). An N6-carboxylysine modification is found at K125. Residue C195 coordinates [2Fe-2S] cluster. E447 is a binding site for Mg(2+). S473 functions as the Proton acceptor in the catalytic mechanism.

Belongs to the IlvD/Edd family. As to quaternary structure, homodimer. [2Fe-2S] cluster is required as a cofactor. Requires Mg(2+) as cofactor.

It carries out the reaction (2R)-2,3-dihydroxy-3-methylbutanoate = 3-methyl-2-oxobutanoate + H2O. It catalyses the reaction (2R,3R)-2,3-dihydroxy-3-methylpentanoate = (S)-3-methyl-2-oxopentanoate + H2O. The protein operates within amino-acid biosynthesis; L-isoleucine biosynthesis; L-isoleucine from 2-oxobutanoate: step 3/4. Its pathway is amino-acid biosynthesis; L-valine biosynthesis; L-valine from pyruvate: step 3/4. In terms of biological role, functions in the biosynthesis of branched-chain amino acids. Catalyzes the dehydration of (2R,3R)-2,3-dihydroxy-3-methylpentanoate (2,3-dihydroxy-3-methylvalerate) into 2-oxo-3-methylpentanoate (2-oxo-3-methylvalerate) and of (2R)-2,3-dihydroxy-3-methylbutanoate (2,3-dihydroxyisovalerate) into 2-oxo-3-methylbutanoate (2-oxoisovalerate), the penultimate precursor to L-isoleucine and L-valine, respectively. The polypeptide is Dihydroxy-acid dehydratase (Ralstonia nicotianae (strain ATCC BAA-1114 / GMI1000) (Ralstonia solanacearum)).